Here is a 262-residue protein sequence, read N- to C-terminus: Hydroxyethylthiazole kinase (262 aa).

Met-44 contacts substrate. Positions 118 and 166 each coordinate ATP. Gly-193 contributes to the substrate binding site.

Belongs to the Thz kinase family. Requires Mg(2+) as cofactor.

It catalyses the reaction 5-(2-hydroxyethyl)-4-methylthiazole + ATP = 4-methyl-5-(2-phosphooxyethyl)-thiazole + ADP + H(+). It functions in the pathway cofactor biosynthesis; thiamine diphosphate biosynthesis; 4-methyl-5-(2-phosphoethyl)-thiazole from 5-(2-hydroxyethyl)-4-methylthiazole: step 1/1. In terms of biological role, catalyzes the phosphorylation of the hydroxyl group of 4-methyl-5-beta-hydroxyethylthiazole (THZ). The polypeptide is Hydroxyethylthiazole kinase (Chlamydia caviae (strain ATCC VR-813 / DSM 19441 / 03DC25 / GPIC) (Chlamydophila caviae)).